The following is a 190-amino-acid chain: Probable nicotinate-nucleotide adenylyltransferase (190 aa).

Belongs to the NadD family.

It carries out the reaction nicotinate beta-D-ribonucleotide + ATP + H(+) = deamido-NAD(+) + diphosphate. Its pathway is cofactor biosynthesis; NAD(+) biosynthesis; deamido-NAD(+) from nicotinate D-ribonucleotide: step 1/1. Catalyzes the reversible adenylation of nicotinate mononucleotide (NaMN) to nicotinic acid adenine dinucleotide (NaAD). This chain is Probable nicotinate-nucleotide adenylyltransferase, found in Myxococcus xanthus (strain DK1622).